A 941-amino-acid polypeptide reads, in one-letter code: UvrABC system protein A (941 aa).

Residue 31 to 38 (GLSGSGKS) coordinates ATP. A C4-type zinc finger spans residues 253–280 (CPICGYSMRELEPRLFSFNNPAGACPTC). 2 ABC transporter domains span residues 310–587 (WDRR…PESL) and 607–937 (ANPE…RFLK). An ATP-binding site is contributed by 640–647 (GVSGSGKS). The segment at 740-766 (CEACQGDGVIKVEMHFLPDIYVPCDQC) adopts a C4-type zinc-finger fold.

It belongs to the ABC transporter superfamily. UvrA family. Forms a heterotetramer with UvrB during the search for lesions.

Its subcellular location is the cytoplasm. Functionally, the UvrABC repair system catalyzes the recognition and processing of DNA lesions. UvrA is an ATPase and a DNA-binding protein. A damage recognition complex composed of 2 UvrA and 2 UvrB subunits scans DNA for abnormalities. When the presence of a lesion has been verified by UvrB, the UvrA molecules dissociate. In Salmonella typhi, this protein is UvrABC system protein A.